The following is a 150-amino-acid chain: Large ribosomal subunit protein bL9 (150 aa).

Belongs to the bacterial ribosomal protein bL9 family.

Functionally, binds to the 23S rRNA. The chain is Large ribosomal subunit protein bL9 from Burkholderia pseudomallei (strain 668).